A 227-amino-acid polypeptide reads, in one-letter code: Ribonuclease 3 (227 aa).

Residues 4–133 (FEKLEKLLSY…LIAAIYLDSN (130 aa)) form the RNase III domain. Glu46 is a binding site for Mg(2+). Asp50 is an active-site residue. Mg(2+)-binding residues include Asn119 and Glu122. Residue Glu122 is part of the active site. The DRBM domain maps to 158-226 (DPKTALQEWA…ARSLLHRLKN (69 aa)).

Belongs to the ribonuclease III family. As to quaternary structure, homodimer. Mg(2+) is required as a cofactor.

It localises to the cytoplasm. It catalyses the reaction Endonucleolytic cleavage to 5'-phosphomonoester.. In terms of biological role, digests double-stranded RNA. Involved in the processing of primary rRNA transcript to yield the immediate precursors to the large and small rRNAs (23S and 16S). Processes some mRNAs, and tRNAs when they are encoded in the rRNA operon. Processes pre-crRNA and tracrRNA of type II CRISPR loci if present in the organism. The polypeptide is Ribonuclease 3 (Rickettsia conorii (strain ATCC VR-613 / Malish 7)).